The chain runs to 231 residues: Sugar fermentation stimulation protein homolog (231 aa).

Belongs to the SfsA family.

This chain is Sugar fermentation stimulation protein homolog, found in Pyrobaculum islandicum (strain DSM 4184 / JCM 9189 / GEO3).